Consider the following 502-residue polypeptide: Lysine--tRNA ligase (502 aa).

Residues Glu-398 and Glu-405 each coordinate Mg(2+).

This sequence belongs to the class-II aminoacyl-tRNA synthetase family. As to quaternary structure, homodimer. It depends on Mg(2+) as a cofactor.

It localises to the cytoplasm. The catalysed reaction is tRNA(Lys) + L-lysine + ATP = L-lysyl-tRNA(Lys) + AMP + diphosphate. This is Lysine--tRNA ligase from Thermosipho melanesiensis (strain DSM 12029 / CIP 104789 / BI429).